The sequence spans 445 residues: Tubulin beta-4B chain (445 aa).

An MREI motif motif is present at residues 1-4 (MREI). Glutamine 11 serves as a coordination point for GTP. Residue threonine 55 is modified to Phosphothreonine. Lysine 58 bears the N6-acetyllysine mark. GTP contacts are provided by glutamate 69, serine 138, glycine 142, threonine 143, and glycine 144. Glutamate 69 serves as a coordination point for Mg(2+). The residue at position 172 (serine 172) is a Phosphoserine; by CDK1. 2 residues coordinate GTP: asparagine 204 and asparagine 226. Residues 426 to 445 (QDATAEEEGEFEEEAEEEVA) form a disordered region. Positions 429 to 445 (TAEEEGEFEEEAEEEVA) are enriched in acidic residues. Glutamate 438 carries the 5-glutamyl polyglutamate modification.

This sequence belongs to the tubulin family. Dimer of alpha and beta chains. A typical microtubule is a hollow water-filled tube with an outer diameter of 25 nm and an inner diameter of 15 nM. Alpha-beta heterodimers associate head-to-tail to form protofilaments running lengthwise along the microtubule wall with the beta-tubulin subunit facing the microtubule plus end conferring a structural polarity. Microtubules usually have 13 protofilaments but different protofilament numbers can be found in some organisms and specialized cells. Component of sperm flagellar doublet microtubules. It depends on Mg(2+) as a cofactor. Post-translationally, some glutamate residues at the C-terminus are polyglycylated, resulting in polyglycine chains on the gamma-carboxyl group. Glycylation is mainly limited to tubulin incorporated into axonemes (cilia and flagella) whereas glutamylation is prevalent in neuronal cells, centrioles, axonemes, and the mitotic spindle. Both modifications can coexist on the same protein on adjacent residues, and lowering polyglycylation levels increases polyglutamylation, and reciprocally. Cilia and flagella glycylation is required for their stability and maintenance. Flagella glycylation controls sperm motility. In terms of processing, some glutamate residues at the C-terminus are polyglutamylated, resulting in polyglutamate chains on the gamma-carboxyl group. Polyglutamylation plays a key role in microtubule severing by spastin (SPAST). SPAST preferentially recognizes and acts on microtubules decorated with short polyglutamate tails: severing activity by SPAST increases as the number of glutamates per tubulin rises from one to eight, but decreases beyond this glutamylation threshold. Glutamylation is also involved in cilia motility. Phosphorylated on Ser-172 by CDK1 during the cell cycle, from metaphase to telophase, but not in interphase. This phosphorylation inhibits tubulin incorporation into microtubules.

Its subcellular location is the cytoplasm. It localises to the cytoskeleton. The protein localises to the flagellum axoneme. Its function is as follows. Tubulin is the major constituent of microtubules, a cylinder consisting of laterally associated linear protofilaments composed of alpha- and beta-tubulin heterodimers. Microtubules grow by the addition of GTP-tubulin dimers to the microtubule end, where a stabilizing cap forms. Below the cap, tubulin dimers are in GDP-bound state, owing to GTPase activity of alpha-tubulin. This chain is Tubulin beta-4B chain (Tubb4b), found in Rattus norvegicus (Rat).